Reading from the N-terminus, the 416-residue chain is Leu/Ile/Val-binding protein homolog 4 (416 aa).

The N-terminal stretch at 1–26 is a signal peptide; the sequence is MSLKVFLQAGVACAALSLAGAAGASA.

The protein belongs to the leucine-binding protein family.

In terms of biological role, component of an amino-acid transport system. The sequence is that of Leu/Ile/Val-binding protein homolog 4 from Brucella melitensis biotype 1 (strain ATCC 23456 / CCUG 17765 / NCTC 10094 / 16M).